A 132-amino-acid polypeptide reads, in one-letter code: Small ribosomal subunit protein eS24 (132 aa).

The span at Arg90–Lys100 shows a compositional bias: basic and acidic residues. The segment at Arg90–Asp132 is disordered. Over residues Lys101–Gly119 the composition is skewed to basic residues.

This sequence belongs to the eukaryotic ribosomal protein eS24 family. As to quaternary structure, component of the small ribosomal subunit. Part of the small subunit (SSU) processome, composed of more than 70 proteins and the RNA chaperone small nucleolar RNA (snoRNA) U3.

It is found in the cytoplasm. Its subcellular location is the nucleus. The protein localises to the nucleolus. Functionally, component of the small ribosomal subunit. The ribosome is a large ribonucleoprotein complex responsible for the synthesis of proteins in the cell. Required for processing of pre-rRNA and maturation of 40S ribosomal subunits. Part of the small subunit (SSU) processome, first precursor of the small eukaryotic ribosomal subunit. During the assembly of the SSU processome in the nucleolus, many ribosome biogenesis factors, an RNA chaperone and ribosomal proteins associate with the nascent pre-rRNA and work in concert to generate RNA folding, modifications, rearrangements and cleavage as well as targeted degradation of pre-ribosomal RNA by the RNA exosome. In Xenopus laevis (African clawed frog), this protein is Small ribosomal subunit protein eS24 (rps24).